Reading from the N-terminus, the 728-residue chain is Protein Hook homolog 1 (728 aa).

The residue at position 1 (Met-1) is an N-acetylmethionine. Positions 1 to 555 (MEETQPPPQP…LKQKLEAHME (555 aa)) are sufficient for interaction with microtubules. The Calponin-homology (CH) domain maps to 12–128 (LPLCDSLMIW…RLLQLILGCA (117 aa)). 2 coiled-coil regions span residues 169 to 434 (PNDA…RCSQ) and 477 to 658 (LRLQ…AKFR). The segment at 169–444 (PNDAVGELEQ…VQQDHLNQTD (276 aa)) is sufficient for homodimerization, interaction wit HOOK2, HOOK3 and AP4M1. Ser-235 is modified (phosphoserine). Residues 481–512 (QEGSENERIEELQEQLEQKHRKMNELETEQRL) are disordered. Residues 503–512 (MNELETEQRL) show a composition bias toward basic and acidic residues. The segment at 657–728 (FRDYEEKLIV…SVKVPATTSD (72 aa)) is sufficient for interaction with AKTIP and VPS18. Thr-699 carries the phosphothreonine modification. A phosphoserine mark is found at Ser-719 and Ser-727.

Belongs to the hook family. As to quaternary structure, self-associates. Component of the FTS/Hook/FHIP complex (FHF complex), composed of AKTIP/FTS, FHIP1B, and one or more members of the Hook family of proteins HOOK1, HOOK2, and HOOK3. Interacts directly with AKTIP/FTS, HOOK2 and HOOK3. Associates with several subunits of the homotypic vesicular sorting complex (the HOPS complex) including VPS16, VPS18, VPS39 and VPS41; these interactions may be indirect. Interacts with CCDC181. Interacts (via coiled-coil region) with RIMBP3 (via C-terminus). Interacts with LRGUK (via guanylate kinase-like domain). Interacts with microtubules. May interact with CLN3. Interacts with AP4M1; the interaction is direct, mediates the interaction between FTS-Hook-FHIP (FHF) complex and AP-4 and the perinuclear distribution of AP-4.

Its subcellular location is the cytoplasm. The protein resides in the cytoskeleton. Its function is as follows. Component of the FTS/Hook/FHIP complex (FHF complex). The FHF complex may function to promote vesicle trafficking and/or fusion via the homotypic vesicular protein sorting complex (the HOPS complex). FHF complex promotes the distribution of AP-4 complex to the perinuclear area of the cell. Required for spermatid differentiation. Probably involved in the positioning of the microtubules of the manchette and the flagellum in relation to the membrane skeleton. In Homo sapiens (Human), this protein is Protein Hook homolog 1.